The sequence spans 1187 residues: Protein WWC2 (1187 aa).

WW domains lie at 10–43 (LPLP…DPRD) and 57–90 (DELP…DPRK). 2 coiled-coil regions span residues 121 to 194 (KEQR…YKQQ) and 224 to 256 (ELKS…FHLD). Ser286 bears the Phosphoserine mark. Residues 302-423 (LAEKVRLSLQ…EETTKLTTSL (122 aa)) adopt a coiled-coil conformation. Residues 438 to 464 (SSGSSLGSLASSRGSLNTSSRGSLNSL) form a disordered region. The C2 domain occupies 697–820 (ETAQVQIGLR…FSNEIFMLWY (124 aa)). 2 disordered regions span residues 830-849 (CKKN…QPML) and 874-963 (ELAQ…ETNT). Residues 859–885 (ALLARTSAELLAVEQELAQEEEEEELR) are a coiled coil. A compositionally biased stretch (acidic residues) spans 875–884 (LAQEEEEEEL). Thr999 bears the Phosphothreonine mark. Residue Ser1017 is modified to Phosphoserine. The segment at 1026 to 1045 (SLFVRNSTERRSLRVKRAVC) is interaction with PRKCZ. Residues 1063–1143 (DLELDLQASL…DLNAERLMRQ (81 aa)) adopt a coiled-coil conformation.

Belongs to the WWC family. In terms of assembly, forms homodimers and heterodimers with WWC1 and WWC3. Interacts with DLC1 and PRKCZ. Interacts (via WW domains) with LATS1 and LATS2.

The protein localises to the cytoplasm. It localises to the cytosol. Regulator of the Hippo signaling pathway, also known as the Salvador-Warts-Hippo (SWH) pathway. Enhances phosphorylation of LATS1 and YAP1 and negatively regulates cell proliferation and organ growth due to a suppression of the transcriptional activity of YAP1, the major effector of the Hippo pathway. This chain is Protein WWC2 (Wwc2), found in Mus musculus (Mouse).